A 411-amino-acid chain; its full sequence is Acetylornithine aminotransferase, mitochondrial (411 aa).

Residue Lys262 is modified to N6-(pyridoxal phosphate)lysine.

Belongs to the class-III pyridoxal-phosphate-dependent aminotransferase family. Pyridoxal 5'-phosphate is required as a cofactor.

The protein resides in the mitochondrion matrix. It catalyses the reaction N(2)-acetyl-L-ornithine + 2-oxoglutarate = N-acetyl-L-glutamate 5-semialdehyde + L-glutamate. It participates in amino-acid biosynthesis; L-arginine biosynthesis; N(2)-acetyl-L-ornithine from L-glutamate: step 4/4. This chain is Acetylornithine aminotransferase, mitochondrial (ARG8), found in Yarrowia lipolytica (strain CLIB 122 / E 150) (Yeast).